Here is a 320-residue protein sequence, read N- to C-terminus: o-succinylbenzoate synthase (320 aa).

Lys133 acts as the Proton donor in catalysis. Mg(2+) is bound by residues Asp161, Glu190, and Asp213. Lys235 (proton acceptor) is an active-site residue.

The protein belongs to the mandelate racemase/muconate lactonizing enzyme family. MenC type 1 subfamily. It depends on a divalent metal cation as a cofactor.

It carries out the reaction (1R,6R)-6-hydroxy-2-succinyl-cyclohexa-2,4-diene-1-carboxylate = 2-succinylbenzoate + H2O. It functions in the pathway quinol/quinone metabolism; 1,4-dihydroxy-2-naphthoate biosynthesis; 1,4-dihydroxy-2-naphthoate from chorismate: step 4/7. Its pathway is quinol/quinone metabolism; menaquinone biosynthesis. Its function is as follows. Converts 2-succinyl-6-hydroxy-2,4-cyclohexadiene-1-carboxylate (SHCHC) to 2-succinylbenzoate (OSB). This is o-succinylbenzoate synthase from Escherichia coli O139:H28 (strain E24377A / ETEC).